Reading from the N-terminus, the 757-residue chain is Endoribonuclease ysh1 (757 aa).

Zn(2+) is bound by residues His78, His80, Asp82, His83, His165, and Asp186. His403 acts as the Proton donor in catalysis. Zn(2+) is bound at residue His425. The disordered stretch occupies residues 698-757 (SQNDVSEDDFENEESDDDKIFEQQTKIEDDVKNENKTEPVEEQKSEEKNEQPNLKKEELS). Positions 702–714 (VSEDDFENEESDD) are enriched in acidic residues. Basic and acidic residues predominate over residues 715-757 (DKIFEQQTKIEDDVKNENKTEPVEEQKSEEKNEQPNLKKEELS).

This sequence belongs to the metallo-beta-lactamase superfamily. RNA-metabolizing metallo-beta-lactamase-like family. CPSF2/YSH1 subfamily.

The protein localises to the cytoplasm. It is found in the nucleus. Functionally, component of the cleavage factor I (CF I) involved in pre-mRNA 3'-end processing. The protein is Endoribonuclease ysh1 (ysh1) of Schizosaccharomyces pombe (strain 972 / ATCC 24843) (Fission yeast).